Consider the following 501-residue polypeptide: Glucan endo-1,3-beta-glucosidase 3 (501 aa).

Residues 1–18 (MAALLLLFLFLFASSALS) form the signal peptide. Residues asparagine 88 and asparagine 107 are each glycosylated (N-linked (GlcNAc...) asparagine). Glutamate 116 functions as the Proton donor in the catalytic mechanism. N-linked (GlcNAc...) asparagine glycans are attached at residues asparagine 171 and asparagine 253. Glutamate 263 functions as the Nucleophile in the catalytic mechanism. 3 N-linked (GlcNAc...) asparagine glycosylation sites follow: asparagine 295, asparagine 353, and asparagine 357. Cysteine 361 and cysteine 424 are joined by a disulfide. N-linked (GlcNAc...) asparagine glycans are attached at residues asparagine 451, asparagine 456, asparagine 457, and asparagine 466. A lipid anchor (GPI-anchor amidated serine) is attached at serine 470. The propeptide at 471-501 (GCIPKYYHHPHASFGDLTLLSLLLIIALVFL) is removed in mature form.

This sequence belongs to the glycosyl hydrolase 17 family. Post-translationally, contains two additional disulfide bonds.

It localises to the cell membrane. The catalysed reaction is Hydrolysis of (1-&gt;3)-beta-D-glucosidic linkages in (1-&gt;3)-beta-D-glucans.. This Arabidopsis thaliana (Mouse-ear cress) protein is Glucan endo-1,3-beta-glucosidase 3.